Reading from the N-terminus, the 56-residue chain is Putative 2-Cys peroxiredoxin BAS1 (56 aa).

It belongs to the peroxiredoxin family. AhpC/Prx1 subfamily. As to quaternary structure, homodimer; disulfide-linked, upon oxidation.

The protein localises to the plastid. It localises to the chloroplast. The enzyme catalyses a hydroperoxide + [thioredoxin]-dithiol = an alcohol + [thioredoxin]-disulfide + H2O. In terms of biological role, thiol-specific peroxidase that catalyzes the reduction of hydrogen peroxide and organic hydroperoxides to water and alcohols, respectively. Plays a role in cell protection against oxidative stress by detoxifying peroxides. May be an antioxidant enzyme particularly in the developing shoot and photosynthesizing leaf. The chain is Putative 2-Cys peroxiredoxin BAS1 from Pinus strobus (Eastern white pine).